An 878-amino-acid polypeptide reads, in one-letter code: Phosphoenolpyruvate carboxylase (878 aa).

Residues H137 and K545 contribute to the active site.

Belongs to the PEPCase type 1 family. Mg(2+) is required as a cofactor.

It catalyses the reaction oxaloacetate + phosphate = phosphoenolpyruvate + hydrogencarbonate. In terms of biological role, forms oxaloacetate, a four-carbon dicarboxylic acid source for the tricarboxylic acid cycle. This Proteus mirabilis (strain HI4320) protein is Phosphoenolpyruvate carboxylase.